Here is a 4367-residue protein sequence, read N- to C-terminus: Guanylate cyclase (4367 aa).

Over residues 1-10 (MKKTRTTAAE) the composition is skewed to polar residues. Residues 1–70 (MKKTRTTAAE…MSFLQGKHQQ (70 aa)) are disordered. Residues 1-150 (MKKTRTTAAE…FKNLWEQFHR (150 aa)) lie on the Cytoplasmic side of the membrane. Positions 19–33 (PHDEHRGRGREHGGA) are enriched in basic and acidic residues. Over residues 54–63 (HQATQKQMSF) the composition is skewed to polar residues. A helical transmembrane segment spans residues 151-171 (VINWWFLVMAIIQAIPQLHYN). Residues 172-174 (PNH) lie on the Extracellular side of the membrane. The chain crosses the membrane as a helical span at residues 175 to 195 (AWSTALPFAIVLVFGMLKDAF). The Cytoplasmic segment spans residues 196-373 (TDLGRRERDR…GFKRPHIEKD (178 aa)). Residues 374 to 394 (INTYLFISFFIVFLTILISVM) traverse the membrane as a helical segment. Over 395–452 (SKWSVQERDSGDTGVTDAGASSGSGSSSGETSQTYGSSVEFMLGSRDLLQNPWMSILR) the chain is Extracellular. A disordered region spans residues 402–426 (RDSGDTGVTDAGASSGSGSSSGETS). Over residues 407-426 (TGVTDAGASSGSGSSSGETS) the composition is skewed to low complexity. A helical transmembrane segment spans residues 453 to 473 (FLAVYAPVLPLSLPLILDVVY). The Cytoplasmic segment spans residues 474–2258 (LLQSVLIEGD…VHGRLSLMRV (1785 aa)). 10 disordered regions span residues 486–535 (IRGG…QQPL), 550–699 (SEKF…ISGR), 831–918 (ETSA…ASSL), 932–966 (RLEE…PQLA), 980–1047 (VGIQ…GELS), 1079–1164 (GMSF…MPAV), 1344–1593 (PSGT…SLKS), 1607–1652 (FRRG…TGTG), 1773–1861 (GGRG…GLRS), and 1881–1946 (DKQH…PQHL). Residues 523–535 (AHSSQNASLQQPL) are compositionally biased toward polar residues. 2 stretches are compositionally biased toward basic and acidic residues: residues 605–628 (ETLR…REQL) and 670–679 (RRSDDRDRKS). Over residues 850–863 (SAASSRSQSAPASA) the composition is skewed to low complexity. The span at 880-892 (QTLTNQQTGQQSP) shows a compositional bias: polar residues. Positions 906–917 (ASPGAADSPASS) are enriched in low complexity. Basic and acidic residues predominate over residues 932–948 (RLEETGSQKEEDSRSDR). Low complexity predominate over residues 983 to 996 (QSQHSSQSLLSSRQ). Residues 1025 to 1047 (DRMYSRDYHRESRSSSPRDGELS) are compositionally biased toward basic and acidic residues. 2 stretches are compositionally biased toward polar residues: residues 1084 to 1094 (SRPSSQFTFSS) and 1117 to 1130 (RSLT…TASP). Residues 1344-1357 (PSGTSASSGAPSGP) are compositionally biased toward low complexity. Composition is skewed to gly residues over residues 1370–1381 (QGQGHGSLGAPG) and 1389–1400 (CLGGAGGSGARG). A compositionally biased stretch (pro residues) spans 1443 to 1454 (VPSPRPLSPAGP). Basic and acidic residues predominate over residues 1527–1542 (SFKEKHEEFAFSKDED). Residues 1543–1567 (TATVDQDDTQSATDEEHDVEGEEEE) show a composition bias toward acidic residues. Residues 1583-1593 (SASASLMSLKS) are compositionally biased toward low complexity. Polar residues-rich tracts occupy residues 1628 to 1652 (GRSS…TGTG), 1779 to 1791 (VSLS…SSAK), and 1843 to 1852 (VNPSGQTYSQ). Over residues 1881 to 1922 (DKQHQRGHGPEGDEGSHELEGHDAHTGDSHGGHHRDQAEPRA) the composition is skewed to basic and acidic residues. A compositionally biased stretch (polar residues) spans 1933–1942 (RLPQKTQNRL). The chain crosses the membrane as a helical span at residues 2259–2279 (STVILWSFFKSLCIGLPTFLF). Over 2280-2289 (QPQAFWSAVE) the chain is Extracellular. A helical membrane pass occupies residues 2290–2310 (VYDPLLLMIVDFFWTTLPGII). The Cytoplasmic portion of the chain corresponds to 2311–2343 (HGYSDQDLPTHLLPSVPVLYTPGRRRLYFNGFR). A helical membrane pass occupies residues 2344–2364 (FILWTVEGIIYSFLIFYLLQA). Topologically, residues 2365–2376 (TWMDGNTFHDGQ) are extracellular. Residues 2377 to 2397 (VLGFHSYGILLLFGSLLQSNV) traverse the membrane as a helical segment. Residues 2398-2408 (RIILETSLWTP) are Cytoplasmic-facing. Residues 2409 to 2429 (TFLFTTIVLCTIMFFPTVLLY) form a helical membrane-spanning segment. The Extracellular portion of the chain corresponds to 2430 to 2444 (SVTGWPRRYMELAGR). A helical transmembrane segment spans residues 2445-2465 (VVFAWPMLYFLIPLWVSIGIL). The Cytoplasmic portion of the chain corresponds to 2466–2724 (VQLLLQVFTS…LKRLVPWYRV (259 aa)). A helical membrane pass occupies residues 2725 to 2745 (IFMLIALYQLLSFLTEYFIDI). Over 2746-2762 (HWNPGETEMEPWMCVPT) the chain is Extracellular. The chain crosses the membrane as a helical span at residues 2763-2783 (LVVEIGFAAVVVCTFYDFIFL). Topologically, residues 2784 to 2785 (DH) are cytoplasmic. A helical transmembrane segment spans residues 2786 to 2806 (FSLILNSIVFLMVSSSIVFYT). At 2807–2823 (ASHVDGTLTSVLFPVFT) the chain is on the extracellular side. The helical transmembrane segment at 2824–2844 (FVILRISFLQAVVWNILFLIV) threads the bilayer. Residues 2845 to 2858 (TVARFMLDKKYLPP) are Cytoplasmic-facing. The chain crosses the membrane as a helical span at residues 2859–2879 (LNFVHYIPLFIGIDVFVAFVG). Over 2880-2903 (YRLEYNQRKSFLLDYSVDASRRKQ) the chain is Extracellular. A helical membrane pass occupies residues 2904 to 2924 (REILNTMLPSFVVDQMINSEL). At 2925–3693 (NEEGIPTSLK…RTHFYNNKSN (769 aa)) the chain is on the cytoplasmic side. A Guanylate cyclase 1 domain is found at 2942–3150 (SVIFCDVYEF…DTVNTASRMK (209 aa)). 6 disordered regions span residues 3214 to 3245 (DVIS…ASSG), 3359 to 3402 (GQTE…SRFD), 3456 to 3475 (SGDE…EVPL), 3485 to 3508 (QARE…HTPT), 3523 to 3596 (GCAA…ETEK), and 3620 to 3653 (FRRR…VDDE). A compositionally biased stretch (basic and acidic residues) spans 3383–3402 (RADRRPAGRREDSRGDSRFD). 3 stretches are compositionally biased toward basic and acidic residues: residues 3485-3499 (QARE…KRSG), 3529-3541 (EEEK…RESE), and 3549-3569 (TESR…DARE). Residues 3626 to 3637 (AAPSEAASPSSA) are compositionally biased toward low complexity. Residues 3694-3714 (INTIEQALIIFLVTFCVQTLT) traverse the membrane as a helical segment. Residues 3715 to 3736 (RLALPRFYVVCSHHTINLHVCT) lie on the Extracellular side of the membrane. A helical membrane pass occupies residues 3737–3757 (GLYWAVRATYTLAAFVLWMLF). The Cytoplasmic segment spans residues 3758-3772 (HYRNRKEVATCLELR). Residues 3773–3793 (WMVFLLNLLFISASCVFALSN) form a helical membrane-spanning segment. Residues 3794–3895 (SWGVCGQQQE…GSDLVTANGR (102 aa)) are Extracellular-facing. A helical transmembrane segment spans residues 3896–3916 (AYTYWLLSDTIELFFYIVILH). The Cytoplasmic portion of the chain corresponds to 3917-3921 (HNTGL). A helical membrane pass occupies residues 3922–3942 (LFQNCILVDVLLMTMSLTFII). The Extracellular portion of the chain corresponds to 3943–3950 (TTARETAS). Residues 3951-3971 (TVSTIATFPCYVFFNLVSAYC) form a helical membrane-spanning segment. Residues 3972-4367 (KEYIDRLTFY…GSTPGSALGS (396 aa)) are Cytoplasmic-facing. A Guanylate cyclase 2 domain is found at 4024-4159 (TFLFADICGF…MDVLTGNMME (136 aa)). Residues D4029, I4030, and D4073 each coordinate Mg(2+). Residues 4292-4367 (ASHGDSGPSD…GSTPGSALGS (76 aa)) form a disordered region. The segment covering 4333–4344 (DGLKQLRKEIER) has biased composition (basic and acidic residues). Over residues 4356–4367 (DIGSTPGSALGS) the composition is skewed to polar residues.

This sequence in the N-terminal section; belongs to the cation transport ATPase (P-type) (TC 3.A.3) family. Type IV subfamily. In the C-terminal section; belongs to the adenylyl cyclase class-4/guanylyl cyclase family. As to quaternary structure, interacts with chaperone CDC50.1; the interaction regulates guanylate cyclase GC trafficking and sensing environmental changes. Interacts with UGO; the interaction regulates guanylate cyclase GC trafficking and catalytic activity. Mg(2+) serves as cofactor. Mn(2+) is required as a cofactor.

The protein localises to the cell membrane. It catalyses the reaction GTP = 3',5'-cyclic GMP + diphosphate. In terms of biological role, catalyzes the synthesis of the second messenger cGMP from GTP. During the tachyzoite lytic growth cycle in host cells, detects and transduces environmental changes in potassium, phosphatidic acid and pH levels. By producing cGMP in response to these environmental changes, activates PKG and thereby regulates PKG-dependent microneme secretion which is essential for tachyzoite motility, host cell attachment invasion of and egress from host cells. May play a role in the fission of connected tachyzoites at their basal pole during egress. Does not display flippase activity towards phosphatidylserine, phosphatidic acid or phosphatidylcholine. In Toxoplasma gondii (strain ATCC 50853 / GT1), this protein is Guanylate cyclase.